The following is a 509-amino-acid chain: ATP synthase subunit alpha (509 aa).

169–176 serves as a coordination point for ATP; sequence GDRQTGKT.

The protein belongs to the ATPase alpha/beta chains family. F-type ATPases have 2 components, CF(1) - the catalytic core - and CF(0) - the membrane proton channel. CF(1) has five subunits: alpha(3), beta(3), gamma(1), delta(1), epsilon(1). CF(0) has four main subunits: a(1), b(1), b'(1) and c(9-12).

Its subcellular location is the cellular chromatophore membrane. It catalyses the reaction ATP + H2O + 4 H(+)(in) = ADP + phosphate + 5 H(+)(out). Produces ATP from ADP in the presence of a proton gradient across the membrane. The alpha chain is a regulatory subunit. This chain is ATP synthase subunit alpha, found in Rhodobacter capsulatus (Rhodopseudomonas capsulata).